A 298-amino-acid polypeptide reads, in one-letter code: tRNA uridine(34) hydroxylase (298 aa).

The Rhodanese domain maps to 123–217 (QNPDVTLVDT…YLEEIPVAES (95 aa)). The Cysteine persulfide intermediate role is filled by C177.

This sequence belongs to the TrhO family.

The catalysed reaction is uridine(34) in tRNA + AH2 + O2 = 5-hydroxyuridine(34) in tRNA + A + H2O. Its function is as follows. Catalyzes oxygen-dependent 5-hydroxyuridine (ho5U) modification at position 34 in tRNAs. This is tRNA uridine(34) hydroxylase from Picosynechococcus sp. (strain ATCC 27264 / PCC 7002 / PR-6) (Agmenellum quadruplicatum).